The following is a 241-amino-acid chain: LexA repressor (241 aa).

Positions Phe-26–Thr-46 form a DNA-binding region, H-T-H motif. Active-site for autocatalytic cleavage activity residues include Ser-162 and Lys-200.

It belongs to the peptidase S24 family. As to quaternary structure, homodimer.

It carries out the reaction Hydrolysis of Ala-|-Gly bond in repressor LexA.. Functionally, represses a number of genes involved in the response to DNA damage (SOS response), including recA and lexA. In the presence of single-stranded DNA, RecA interacts with LexA causing an autocatalytic cleavage which disrupts the DNA-binding part of LexA, leading to derepression of the SOS regulon and eventually DNA repair. This Ruegeria sp. (strain TM1040) (Silicibacter sp.) protein is LexA repressor.